A 266-amino-acid chain; its full sequence is Tryptophan synthase alpha chain (266 aa).

Residues E52 and D63 each act as proton acceptor in the active site.

This sequence belongs to the TrpA family. As to quaternary structure, tetramer of two alpha and two beta chains.

It carries out the reaction (1S,2R)-1-C-(indol-3-yl)glycerol 3-phosphate + L-serine = D-glyceraldehyde 3-phosphate + L-tryptophan + H2O. It participates in amino-acid biosynthesis; L-tryptophan biosynthesis; L-tryptophan from chorismate: step 5/5. Its function is as follows. The alpha subunit is responsible for the aldol cleavage of indoleglycerol phosphate to indole and glyceraldehyde 3-phosphate. The sequence is that of Tryptophan synthase alpha chain from Nocardia farcinica (strain IFM 10152).